The following is a 338-amino-acid chain: UPF0284 protein PAE0372 (338 aa).

It belongs to the UPF0284 family.

This is UPF0284 protein PAE0372 from Pyrobaculum aerophilum (strain ATCC 51768 / DSM 7523 / JCM 9630 / CIP 104966 / NBRC 100827 / IM2).